The following is a 402-amino-acid chain: Phosphoglycerate kinase (402 aa).

Substrate-binding positions include 24-26 (DFN), R40, 63-66 (HFGR), R122, and R155. Residues K206, G297, E328, and 357-360 (GGDS) each bind ATP.

It belongs to the phosphoglycerate kinase family. Monomer.

It localises to the cytoplasm. The enzyme catalyses (2R)-3-phosphoglycerate + ATP = (2R)-3-phospho-glyceroyl phosphate + ADP. It participates in carbohydrate degradation; glycolysis; pyruvate from D-glyceraldehyde 3-phosphate: step 2/5. The sequence is that of Phosphoglycerate kinase from Synechococcus sp. (strain WH7803).